Consider the following 336-residue polypeptide: Uridine nucleosidase 1 (336 aa).

Catalysis depends on residues Asp-29 and His-260.

This sequence belongs to the IUNH family. Homodimer. Component of the NSH heterocomplex made of URH1/NSH1 and URH2/NSH2 which exhibits strong xanthosine nucleosidase activity. Interacts with URH2. As to expression, expressed ubiquitously in leaves, flowers, stems, pollen cells, root tip meristem and root vasculature.

The protein resides in the cytoplasm. The enzyme catalyses uridine + H2O = D-ribose + uracil. The catalysed reaction is xanthosine + H2O = D-ribose + xanthine. It carries out the reaction inosine + H2O = hypoxanthine + D-ribose. It catalyses the reaction adenosine + H2O = D-ribose + adenine. In terms of biological role, involved in purine and pyrimidine breakdown rather than in pyrimidine salvage, especially in response to dark stress. Together with URH2, required for efficient inosine and xanthosine hydrolytic activities. Unable to use cytidine as a substrate. Can use uridine, inosine, adenosine as well as the cytokinin derivative isopentenyladenine-riboside as substrates. Also hydrolyzes xanthosine with high efficiency. The chain is Uridine nucleosidase 1 from Arabidopsis thaliana (Mouse-ear cress).